We begin with the raw amino-acid sequence, 338 residues long: Glycerol-3-phosphate dehydrogenase [NAD(P)+] (338 aa).

NADPH-binding residues include S13, W14, and K108. K108, G139, and S141 together coordinate sn-glycerol 3-phosphate. Residue A143 participates in NADPH binding. Sn-glycerol 3-phosphate-binding residues include K194, D247, S257, R258, and N259. The active-site Proton acceptor is K194. R258 lines the NADPH pocket. The NADPH site is built by V282 and E284.

Belongs to the NAD-dependent glycerol-3-phosphate dehydrogenase family.

It is found in the cytoplasm. It carries out the reaction sn-glycerol 3-phosphate + NAD(+) = dihydroxyacetone phosphate + NADH + H(+). The enzyme catalyses sn-glycerol 3-phosphate + NADP(+) = dihydroxyacetone phosphate + NADPH + H(+). It participates in membrane lipid metabolism; glycerophospholipid metabolism. In terms of biological role, catalyzes the reduction of the glycolytic intermediate dihydroxyacetone phosphate (DHAP) to sn-glycerol 3-phosphate (G3P), the key precursor for phospholipid synthesis. The protein is Glycerol-3-phosphate dehydrogenase [NAD(P)+] of Streptococcus agalactiae serotype V (strain ATCC BAA-611 / 2603 V/R).